Here is a 367-residue protein sequence, read N- to C-terminus: rRNA processing protein RCL1 (367 aa).

Serine 2 carries the post-translational modification N-acetylserine.

Belongs to the RNA 3'-terminal cyclase family. Type 2 subfamily. In terms of assembly, interacts directly with BMS1 and the U3 snoRNA to form a stable subcomplex. Component of the 90S small subunit processome also known as 90S pre-ribosome that consists of the 35S pre-rRNA, early-associating ribosomal proteins most of which are part of the small ribosomal subunit, the U3 snoRNA and associated proteins.

The protein localises to the nucleus. It is found in the nucleolus. Functionally, does not have cyclase activity. Plays a role in 40S-ribosomal-subunit biogenesis in the early pre-rRNA processing steps at sites A0, A1 and A2 that are required for proper maturation of the 18S RNA. RCL1 activates BMS1 by promoting GDP/GTP exchange. This is rRNA processing protein RCL1 (RCL1) from Saccharomyces cerevisiae (strain ATCC 204508 / S288c) (Baker's yeast).